Reading from the N-terminus, the 175-residue chain is MEKLTDLNYTLSVITLMNNTLHTILEDPGMAYFPYIASVLTVLFALHKASIPTMKIALKTSKCSYKVVKYCIVTIFNTLLKLAGYKEQITTKDEIEKQMDRVVKEMRRQLEMIDKLTTREIEQVELLKRIYDKLMVRSTDEIDMTKEINQKNVRTLEEWENGKNPYEPKEVTAAM.

The Lumenal portion of the chain corresponds to 1 to 28 (MEKLTDLNYTLSVITLMNNTLHTILEDP). N-linked (GlcNAc...) asparagine; by host glycosylation is found at Asn-8 and Asn-18. A helical; Signal-anchor for type III membrane protein membrane pass occupies residues 29–51 (GMAYFPYIASVLTVLFALHKASI). The Cytoplasmic segment spans residues 52-175 (PTMKIALKTS…YEPKEVTAAM (124 aa)). Ca(2+) contacts are provided by Glu-120 and Gln-123.

This sequence belongs to the rotavirus NSP4 family. In terms of assembly, homotetramer. Interacts with the immature particle in the viroplasm. Interacts with host CAV1, early and late in infection. Interacts with host integrin ITGA1/ITGB1 heterodimer. Interacts with host integrin ITGA2/ITGB1 heterodimer. Interaction with microtubules blocks trafficking to the Golgi apparatus. Post-translationally, the N-glycosyl content is primarily Man(9)GlcNAc, with a small amount of Man(8)GlcNAc.

The protein localises to the host rough endoplasmic reticulum membrane. The protein resides in the host membrane. It is found in the host caveola. It localises to the secreted. Plays an essential role in the virus replication cycle by acting as a viroporin. Creates a pore in the host endoplasmic reticulum and as a consequence releases Ca(2+) in the cytoplasm of infected cell. In turn, high levels of cytoplasmic calcium trigger membrane trafficking and transport of viral ER-associated proteins to viroplasms, sites of viral genome replication and immature particle assembly. Its function is as follows. The secreted form acts as an enterotoxin that causes phospholipase C-dependent elevation of the intracellular calcium concentration in host intestinal mucosa cells. Increased concentration of intracellular calcium disrupts the cytoskeleton and the tight junctions, raising the paracellular permeability. Potentiates chloride ion secretion through a calcium ion-dependent signaling pathway, inducing age-dependent diarrhea. To perform this enterotoxigenic role in vivo, NSP4 is released from infected enterocytes in a soluble form capable of diffusing within the intestinal lumen and interacting with host plasma membrane receptors on neighboring epithelial cells such as integrins ITGA1/ITGB1 and ITGA2/ITGB1. The protein is Non-structural glycoprotein 4 of Rotavirus A (strain RVA/Human/United States/DS-1/1976/G2P1B[4]) (RV-A).